A 518-amino-acid chain; its full sequence is Bifunctional purine biosynthesis protein PurH (518 aa).

An MGS-like domain is found at 1–146 (MARIALISVS…KNHESVSILT (146 aa)).

It belongs to the PurH family.

The catalysed reaction is (6R)-10-formyltetrahydrofolate + 5-amino-1-(5-phospho-beta-D-ribosyl)imidazole-4-carboxamide = 5-formamido-1-(5-phospho-D-ribosyl)imidazole-4-carboxamide + (6S)-5,6,7,8-tetrahydrofolate. It catalyses the reaction IMP + H2O = 5-formamido-1-(5-phospho-D-ribosyl)imidazole-4-carboxamide. Its pathway is purine metabolism; IMP biosynthesis via de novo pathway; 5-formamido-1-(5-phospho-D-ribosyl)imidazole-4-carboxamide from 5-amino-1-(5-phospho-D-ribosyl)imidazole-4-carboxamide (10-formyl THF route): step 1/1. It participates in purine metabolism; IMP biosynthesis via de novo pathway; IMP from 5-formamido-1-(5-phospho-D-ribosyl)imidazole-4-carboxamide: step 1/1. This Prochlorococcus marinus (strain MIT 9211) protein is Bifunctional purine biosynthesis protein PurH.